Consider the following 670-residue polypeptide: DNA ligase (670 aa).

Residues Asp-32–Asp-36, Ser-81–Leu-82, and Glu-114 contribute to the NAD(+) site. Lys-116 serves as the catalytic N6-AMP-lysine intermediate. NAD(+)-binding residues include Arg-137, Glu-174, Lys-291, and Lys-315. Positions 409, 412, 427, and 433 each coordinate Zn(2+). A BRCT domain is found at Ala-592–Arg-670.

The protein belongs to the NAD-dependent DNA ligase family. LigA subfamily. Mg(2+) is required as a cofactor. Requires Mn(2+) as cofactor.

The enzyme catalyses NAD(+) + (deoxyribonucleotide)n-3'-hydroxyl + 5'-phospho-(deoxyribonucleotide)m = (deoxyribonucleotide)n+m + AMP + beta-nicotinamide D-nucleotide.. In terms of biological role, DNA ligase that catalyzes the formation of phosphodiester linkages between 5'-phosphoryl and 3'-hydroxyl groups in double-stranded DNA using NAD as a coenzyme and as the energy source for the reaction. It is essential for DNA replication and repair of damaged DNA. This is DNA ligase from Haemophilus influenzae (strain PittGG).